A 1045-amino-acid polypeptide reads, in one-letter code: Bifunctional glutamine synthetase adenylyltransferase/adenylyl-removing enzyme (1045 aa).

The segment at 1-527 (MSGPLRSERK…LHSQLFYRPL (527 aa)) is adenylyl removase. The interval 533–1045 (NLSADAIRLS…GVDSMEQREF (513 aa)) is adenylyl transferase.

Belongs to the GlnE family. The cofactor is Mg(2+).

The enzyme catalyses [glutamine synthetase]-O(4)-(5'-adenylyl)-L-tyrosine + phosphate = [glutamine synthetase]-L-tyrosine + ADP. It carries out the reaction [glutamine synthetase]-L-tyrosine + ATP = [glutamine synthetase]-O(4)-(5'-adenylyl)-L-tyrosine + diphosphate. In terms of biological role, involved in the regulation of glutamine synthetase GlnA, a key enzyme in the process to assimilate ammonia. When cellular nitrogen levels are high, the C-terminal adenylyl transferase (AT) inactivates GlnA by covalent transfer of an adenylyl group from ATP to specific tyrosine residue of GlnA, thus reducing its activity. Conversely, when nitrogen levels are low, the N-terminal adenylyl removase (AR) activates GlnA by removing the adenylyl group by phosphorolysis, increasing its activity. The regulatory region of GlnE binds the signal transduction protein PII (GlnB) which indicates the nitrogen status of the cell. This Corynebacterium glutamicum (strain ATCC 13032 / DSM 20300 / JCM 1318 / BCRC 11384 / CCUG 27702 / LMG 3730 / NBRC 12168 / NCIMB 10025 / NRRL B-2784 / 534) protein is Bifunctional glutamine synthetase adenylyltransferase/adenylyl-removing enzyme.